Reading from the N-terminus, the 405-residue chain is Multidrug resistance protein MdtA (405 aa).

An N-terminal signal peptide occupies residues 1–22 (MKTPRRFPLIALTVAAVLTAAA). A compositionally biased stretch (polar residues) spans 35 to 52 (VQNRQGTEQQRASNSQGS). Residues 35–62 (VQNRQGTEQQRASNSQGSAKRAGNAPPV) form a disordered region.

Belongs to the membrane fusion protein (MFP) (TC 8.A.1) family. As to quaternary structure, part of a tripartite efflux system composed of MdtA, MdtB and MdtC.

The protein localises to the cell inner membrane. In Erwinia amylovora (strain ATCC 49946 / CCPPB 0273 / Ea273 / 27-3), this protein is Multidrug resistance protein MdtA.